The primary structure comprises 155 residues: Nuclear cap-binding protein subunit 2 (155 aa).

MRNA contacts are provided by residues tyrosine 19, tyrosine 42, 111 to 115, 122 to 126, and 132 to 133; these read RTDWD, RQYGR, and QV. The RRM domain maps to 39–117; it reads ATLYVGNLSF…RIIRTDWDAG (79 aa). Residues 121 to 155 form a disordered region; it reads GRQYGRGKSGGQVRDEYRQDYDPARGGYGKMVQKS. A compositionally biased stretch (basic and acidic residues) spans 133–143; it reads VRDEYRQDYDP.

It belongs to the RRM NCBP2 family. As to quaternary structure, component of the nuclear cap-binding complex (CBC), a heterodimer composed of ncbp1/cbp80 and ncbp2/cbp20 that interacts with m7GpppG-capped RNA.

The protein resides in the nucleus. It is found in the cytoplasm. Component of the cap-binding complex (CBC), which binds co-transcriptionally to the 5' cap of pre-mRNAs and is involved in various processes such as pre-mRNA splicing, translation regulation, nonsense-mediated mRNA decay, RNA-mediated gene silencing (RNAi) by microRNAs (miRNAs) and mRNA export. The CBC complex is involved in mRNA export from the nucleus, leading to the recruitment of the mRNA export machinery to the 5' end of mRNA and to mRNA export in a 5' to 3' direction through the nuclear pore. The CBC complex is also involved in mediating U snRNA and intronless mRNAs export from the nucleus. The CBC complex is essential for a pioneer round of mRNA translation, before steady state translation when the CBC complex is replaced by cytoplasmic cap-binding protein eIF4E. The pioneer round of mRNA translation mediated by the CBC complex plays a central role in nonsense-mediated mRNA decay (NMD), NMD only taking place in mRNAs bound to the CBC complex, but not on eIF4E-bound mRNAs. The CBC complex enhances NMD in mRNAs containing at least one exon-junction complex (EJC), promoting the interaction between upf1 and upf2. The CBC complex is also involved in 'failsafe' NMD, which is independent of the EJC complex, while it does not participate in Staufen-mediated mRNA decay (SMD). During cell proliferation, the CBC complex is also involved in microRNAs (miRNAs) biogenesis via its interaction with srrt/ars2, thereby being required for miRNA-mediated RNA interference. The CBC complex also acts as a negative regulator of parn, thereby acting as an inhibitor of mRNA deadenylation. In the CBC complex, ncbp2/cbp20 recognizes and binds capped RNAs (m7GpppG-capped RNA) but requires ncbp1/cbp80 to stabilize the movement of its N-terminal loop and lock the CBC into a high affinity cap-binding state with the cap structure. The conventional cap-binding complex with NCBP2 binds both small nuclear RNA (snRNA) and messenger (mRNA) and is involved in their export from the nucleus. This Danio rerio (Zebrafish) protein is Nuclear cap-binding protein subunit 2 (ncbp2).